A 391-amino-acid chain; its full sequence is Glycerophosphocholine acyltransferase 1 (391 aa).

Topologically, residues 1–66 (MSNNEDPINE…IAKQAEEHES (66 aa)) are cytoplasmic. A helical membrane pass occupies residues 67–87 (FINKVTHLLGVLGFGGFCFLL). The Lumenal segment spans residues 88–92 (GARPQ). Residues 93–113 (DIPYVYCLFFFIFVPLRWIYY) form a helical membrane-spanning segment. Over 114–119 (RFKKWH) the chain is Cytoplasmic. A helical transmembrane segment spans residues 120–140 (YFLLDFCYYANTIFLVDLLLY). Residues 141 to 144 (PKDE) lie on the Lumenal side of the membrane. The chain crosses the membrane as a helical span at residues 145–165 (KLFMVCFSFAEGPLAWALIVW). The Cytoplasmic segment spans residues 166 to 172 (RCSLVFS). The chain crosses the membrane as a helical span at residues 173 to 193 (SVDKIVSVLIHLLPGLVFFTI). Residues 194 to 226 (RWWNPATFEAMHPEGTSGRASWPYVEDKSFLFT) are Lumenal-facing. A helical membrane pass occupies residues 227 to 247 (WLFLVPLVAYFLWQLLYFLIV). Over 248–294 (NVLRRQRLLRDPEVMTSYRELSKKAQKANNVWWRLSGLLGDQNRMLM) the chain is Cytoplasmic. Residues 295 to 315 (YILLQALFTVATTALTVPIFL) traverse the membrane as a helical segment. Residues 316-318 (SYE) are Lumenal-facing. The chain crosses the membrane as a helical span at residues 319-339 (LHAVFQILKVSAAVWNGGSFL). The Cytoplasmic portion of the chain corresponds to 340–391 (LDVMPRQVILKEKKKSELQPAHIQQYHSEPKQDQSPNSMEIRMKTIHSAEEQ). The interval 354–391 (KSELQPAHIQQYHSEPKQDQSPNSMEIRMKTIHSAEEQ) is disordered. The span at 380 to 391 (IRMKTIHSAEEQ) shows a compositional bias: basic and acidic residues.

The protein belongs to the GPC1 family.

Its subcellular location is the membrane. The catalysed reaction is sn-glycerol 3-phosphocholine + an acyl-CoA = a monoacyl-sn-glycero-3-phosphocholine + CoA. The enzyme catalyses sn-glycero-3-phosphoethanolamine + an acyl-CoA = a monoacyl-sn-glycero-3-phosphoethanolamine + CoA. It carries out the reaction sn-glycerol 3-phosphocholine + hexadecanoyl-CoA = hexadecanoyl-sn-glycero-3-phosphocholine + CoA. It catalyses the reaction (9Z)-hexadecenoyl-CoA + sn-glycerol 3-phosphocholine = (9Z-hexadecenoyl)-sn-glycero-3-phosphocholine + CoA. The catalysed reaction is (9Z,12Z)-octadecadienoyl-CoA + sn-glycerol 3-phosphocholine = (9Z,12Z-octadecadienoyl)-sn-glycero-3-phosphocholine + CoA. The enzyme catalyses (12R)-hydroxy-(9Z)-octadecenoyl-CoA + sn-glycerol 3-phosphocholine = (12R-hydroxy-9Z-octadecenoyl)-sn-glycero-3-phosphocholine + CoA. It carries out the reaction (9Z,12Z,15Z)-octadecatrienoyl-CoA + sn-glycerol 3-phosphocholine = (9Z,12Z,15Z-octadecatrienoyl)-sn-glycero-3-phosphocholine + CoA. It catalyses the reaction sn-glycerol 3-phosphocholine + (9Z)-octadecenoyl-CoA = (9Z-octadecenoyl)-sn-glycero-3-phosphocholine + CoA. Functionally, glycerophosphocholine acyltransferase (GPCAT) that utilizes acyl-CoA to acylate glycero-3-phosphocholine (GPC), forming lysophosphatidylcholine (LPC). Shows broad acyl specificities with a preference for 16:0-CoA, polyunsaturated acyl-CoA, and the hydroxylated ricinoleoyl-CoA. Also catalyzes the acylation of glycero-3-phosphoethanolamine (GPE) with acyl-CoA. In addition to acyl-CoA, GPCAT efficiently utilizes LPC and lysophosphatidylethanolamine (LPE) as acyl donors in the acylation of GPC. Contributes to the maintenance of phosphatidylcholine (PC) homeostasis and might also have specific functions in acyl editing of PC, such as transferring acyl groups modified at the sn-2 position of PC to the sn-1. This chain is Glycerophosphocholine acyltransferase 1, found in Ricinus communis (Castor bean).